The chain runs to 155 residues: Small ribosomal subunit protein uS7cz/uS7cy (155 aa).

This sequence belongs to the universal ribosomal protein uS7 family. As to quaternary structure, part of the 30S ribosomal subunit.

It localises to the plastid. It is found in the chloroplast. Its function is as follows. One of the primary rRNA binding proteins, it binds directly to 16S rRNA where it nucleates assembly of the head domain of the 30S subunit. This Coffea arabica (Arabian coffee) protein is Small ribosomal subunit protein uS7cz/uS7cy (rps7-A).